A 203-amino-acid polypeptide reads, in one-letter code: Glycerol-3-phosphate acyltransferase (203 aa).

6 helical membrane-spanning segments follow: residues 3–23 (ILLA…VVVS), 51–71 (KAAI…VWLV), 74–94 (FGIG…LGHL), 116–136 (AVHP…AFFF), 140–160 (SLAA…LFGT), and 164–178 (PVAW…LLIW).

The protein belongs to the PlsY family. As to quaternary structure, probably interacts with PlsX.

It is found in the cell inner membrane. It carries out the reaction an acyl phosphate + sn-glycerol 3-phosphate = a 1-acyl-sn-glycero-3-phosphate + phosphate. The protein operates within lipid metabolism; phospholipid metabolism. In terms of biological role, catalyzes the transfer of an acyl group from acyl-phosphate (acyl-PO(4)) to glycerol-3-phosphate (G3P) to form lysophosphatidic acid (LPA). This enzyme utilizes acyl-phosphate as fatty acyl donor, but not acyl-CoA or acyl-ACP. In Burkholderia pseudomallei (strain K96243), this protein is Glycerol-3-phosphate acyltransferase.